A 464-amino-acid polypeptide reads, in one-letter code: tRNA modification GTPase MnmE (464 aa).

(6S)-5-formyl-5,6,7,8-tetrahydrofolate contacts are provided by R27, E90, and K129. Residues 222–384 (GITLVLAGSV…LYDKIRTLIS (163 aa)) enclose the TrmE-type G domain. Residues 232–237 (NAGKSS), 251–257 (SSYPGTT), and 276–279 (DTAG) each bind GTP. The Mg(2+) site is built by S236 and T257. Residue K464 coordinates (6S)-5-formyl-5,6,7,8-tetrahydrofolate.

This sequence belongs to the TRAFAC class TrmE-Era-EngA-EngB-Septin-like GTPase superfamily. TrmE GTPase family. As to quaternary structure, homodimer. Heterotetramer of two MnmE and two MnmG subunits. It depends on K(+) as a cofactor.

It is found in the cytoplasm. Its function is as follows. Exhibits a very high intrinsic GTPase hydrolysis rate. Involved in the addition of a carboxymethylaminomethyl (cmnm) group at the wobble position (U34) of certain tRNAs, forming tRNA-cmnm(5)s(2)U34. In Borreliella afzelii (strain PKo) (Borrelia afzelii), this protein is tRNA modification GTPase MnmE.